We begin with the raw amino-acid sequence, 159 residues long: SsrA-binding protein (159 aa).

It belongs to the SmpB family.

It localises to the cytoplasm. Functionally, required for rescue of stalled ribosomes mediated by trans-translation. Binds to transfer-messenger RNA (tmRNA), required for stable association of tmRNA with ribosomes. tmRNA and SmpB together mimic tRNA shape, replacing the anticodon stem-loop with SmpB. tmRNA is encoded by the ssrA gene; the 2 termini fold to resemble tRNA(Ala) and it encodes a 'tag peptide', a short internal open reading frame. During trans-translation Ala-aminoacylated tmRNA acts like a tRNA, entering the A-site of stalled ribosomes, displacing the stalled mRNA. The ribosome then switches to translate the ORF on the tmRNA; the nascent peptide is terminated with the 'tag peptide' encoded by the tmRNA and targeted for degradation. The ribosome is freed to recommence translation, which seems to be the essential function of trans-translation. This is SsrA-binding protein from Bifidobacterium adolescentis (strain ATCC 15703 / DSM 20083 / NCTC 11814 / E194a).